The chain runs to 204 residues: UPF0637 protein lwe1043 (204 aa).

The protein belongs to the UPF0637 family.

The polypeptide is UPF0637 protein lwe1043 (Listeria welshimeri serovar 6b (strain ATCC 35897 / DSM 20650 / CCUG 15529 / CIP 8149 / NCTC 11857 / SLCC 5334 / V8)).